Consider the following 444-residue polypeptide: U4/U6 snRNA-associated-splicing factor PRP24 (444 aa).

Residues 1–16 (MEYGHHARPDSKRPLD) are compositionally biased toward basic and acidic residues. Positions 1–29 (MEYGHHARPDSKRPLDEGSPAAAGLTSKK) are disordered. Position 19 is a phosphoserine (Ser-19). RRM domains follow at residues 41–116 (TTVL…HLTE), 117–195 (CTLW…VSNP), and 210–289 (REIM…LADK).

As to quaternary structure, monomer. Interacts with U6 snRNA SNR6 and the LSM2-8 complex (small nuclear RNA); to chaperone formation of the U4/U6-U5 tri-snRNP (small nuclear ribonucleoprotein) assembly, the protein is displaced from the U4/U6 snRNP once pairing is complete.

The protein localises to the nucleus. Functions as a recycling factor of the spliceosome, a machinery that forms on each precursor-messenger RNA (pre-mRNA) and catalyzes the removal of introns. Chaperones the re-annealing of U4 and U6 snRNAs (small nuclear RNAs) released from previous rounds of splicing, an initial step in reforming the U4/U6-U5 tri-snRNP (small nuclear ribonucleoprotein) that can reassemble into another spliceosome complex; this step involves binding U6 and facilitating the unwinding of the U6 internal stem loop, followed by base-pairing of U6 to U4. In Saccharomyces cerevisiae (strain ATCC 204508 / S288c) (Baker's yeast), this protein is U4/U6 snRNA-associated-splicing factor PRP24 (PRP24).